Reading from the N-terminus, the 1374-residue chain is DNA-directed RNA polymerase subunit beta (1374 aa).

The protein belongs to the RNA polymerase beta chain family. As to quaternary structure, the RNAP catalytic core consists of 2 alpha, 1 beta, 1 beta' and 1 omega subunit. When a sigma factor is associated with the core the holoenzyme is formed, which can initiate transcription.

The enzyme catalyses RNA(n) + a ribonucleoside 5'-triphosphate = RNA(n+1) + diphosphate. Functionally, DNA-dependent RNA polymerase catalyzes the transcription of DNA into RNA using the four ribonucleoside triphosphates as substrates. This chain is DNA-directed RNA polymerase subunit beta, found in Rickettsia prowazekii (strain Madrid E).